We begin with the raw amino-acid sequence, 616 residues long: Proline--tRNA ligase (616 aa).

This sequence belongs to the class-II aminoacyl-tRNA synthetase family. ProS type 1 subfamily. Homodimer.

It localises to the cytoplasm. The enzyme catalyses tRNA(Pro) + L-proline + ATP = L-prolyl-tRNA(Pro) + AMP + diphosphate. In terms of biological role, catalyzes the attachment of proline to tRNA(Pro) in a two-step reaction: proline is first activated by ATP to form Pro-AMP and then transferred to the acceptor end of tRNA(Pro). As ProRS can inadvertently accommodate and process non-cognate amino acids such as alanine and cysteine, to avoid such errors it has two additional distinct editing activities against alanine. One activity is designated as 'pretransfer' editing and involves the tRNA(Pro)-independent hydrolysis of activated Ala-AMP. The other activity is designated 'posttransfer' editing and involves deacylation of mischarged Ala-tRNA(Pro). The misacylated Cys-tRNA(Pro) is not edited by ProRS. The chain is Proline--tRNA ligase from Streptococcus gordonii (strain Challis / ATCC 35105 / BCRC 15272 / CH1 / DL1 / V288).